The following is a 293-amino-acid chain: Acetylglutamate kinase (293 aa).

Residues glycine 68–glycine 69, arginine 90, and asparagine 189 each bind substrate.

Belongs to the acetylglutamate kinase family. ArgB subfamily.

The protein localises to the cytoplasm. It carries out the reaction N-acetyl-L-glutamate + ATP = N-acetyl-L-glutamyl 5-phosphate + ADP. It functions in the pathway amino-acid biosynthesis; L-arginine biosynthesis; N(2)-acetyl-L-ornithine from L-glutamate: step 2/4. In terms of biological role, catalyzes the ATP-dependent phosphorylation of N-acetyl-L-glutamate. This chain is Acetylglutamate kinase, found in Caldicellulosiruptor bescii (strain ATCC BAA-1888 / DSM 6725 / KCTC 15123 / Z-1320) (Anaerocellum thermophilum).